The sequence spans 70 residues: Probable rubredoxin HupI (70 aa).

The region spanning 15 to 66 (DDRMECGICWHVYDPAEGDPVWQIPPGTPFSNLTEDWRCPNCDALQSKFMRL) is the Rubredoxin-like domain. 4 residues coordinate Fe cation: cysteine 20, cysteine 23, cysteine 53, and cysteine 56.

Belongs to the rubredoxin family. It depends on Fe(3+) as a cofactor.

Could be an electron transport intermediate in hydrogen oxidation. This chain is Probable rubredoxin HupI (hupI), found in Rhizobium leguminosarum bv. viciae.